Reading from the N-terminus, the 618-residue chain is Sphingomyelin phosphodiesterase 2 (618 aa).

Residues 1–22 form the signal peptide; the sequence is MQQPLIILGIGIVLALVSNVES. The Saposin B-type domain maps to 68 to 151; it reads RKMSCLFCTF…AFIANCGHSD (84 aa). 3 disulfides stabilise this stretch: Cys72–Cys147, Cys75–Cys140, and Cys103–Cys114. Residue Asn89 is glycosylated (N-linked (GlcNAc...) asparagine). An N-linked (GlcNAc...) asparagine glycan is attached at Asn159. Zn(2+)-binding residues include Asp189 and His191. Disulfide bonds link Cys204-Cys216 and Cys217-Cys249. Asp278 contributes to the Zn(2+) binding site. Residue Asn298 is glycosylated (N-linked (GlcNAc...) asparagine). Asn318, His427, His461, and His463 together coordinate Zn(2+). A disulfide bond links Cys387 and Cys435. 2 N-linked (GlcNAc...) asparagine glycosylation sites follow: Asn525 and Asn568. Cystine bridges form between Cys588–Cys594 and Cys600–Cys613.

It belongs to the acid sphingomyelinase family. Zn(2+) serves as cofactor.

The protein resides in the secreted. It catalyses the reaction a sphingomyelin + H2O = phosphocholine + an N-acylsphing-4-enine + H(+). The catalysed reaction is an N-acyl-15-methylhexadecasphing-4-enine-1-phosphocholine + H2O = an N-acyl-15-methylhexadecasphing-4-enine + phosphocholine + H(+). It participates in lipid metabolism; sphingolipid metabolism. Functionally, sphingomyelin phosphodiesterase (sphingomyelinase) that converts sphingomyelin (N-acyl-sphingoid-1-phosphocholine) to ceramide (N-acyl-sphingoid base) and phosphocholine at acidic pH. Displays its enzymatic activity when secreted. May play distinct roles in signaling. The protein is Sphingomyelin phosphodiesterase 2 (asm-2) of Caenorhabditis elegans.